A 154-amino-acid polypeptide reads, in one-letter code: CASP-like protein 5C2 (154 aa).

The Cytoplasmic segment spans residues 1-17 (MEHVPGSFGTSASFALR). The helical transmembrane segment at 18–38 (FGQTIFSAASLIFMCFDFDFY) threads the bilayer. Residues 39–41 (DFT) are Extracellular-facing. Residues 42–62 (TFCYLAMVMAIVTPWSILLAL) form a helical membrane-spanning segment. At 63 to 81 (TDTYSVLVKLLPQELRVLS) the chain is on the cytoplasmic side. The helical transmembrane segment at 82–102 (IVFAGDFVLSFLSLGGACAVA) threads the bilayer. At 103–128 (SATELLASADGKICDGSLCIQYQVSA) the chain is on the extracellular side. Residues 129–149 (ALAFLCWFLLLASALFNFWSL) form a helical membrane-spanning segment. The Cytoplasmic portion of the chain corresponds to 150–154 (PSLYY).

The protein belongs to the Casparian strip membrane proteins (CASP) family. Homodimer and heterodimers.

The protein localises to the cell membrane. The protein is CASP-like protein 5C2 of Arabidopsis thaliana (Mouse-ear cress).